The primary structure comprises 409 residues: Argininosuccinate synthase (409 aa).

ATP-binding positions include 12–20 (AYSGGLDTS) and Ala-39. L-citrulline contacts are provided by Tyr-90 and Ser-95. Residue Gly-120 participates in ATP binding. Residues Thr-122, Asn-126, and Asp-127 each coordinate L-aspartate. Asn-126 contacts L-citrulline. Positions 130, 181, 190, 266, and 278 each coordinate L-citrulline.

It belongs to the argininosuccinate synthase family. Type 1 subfamily. As to quaternary structure, homotetramer.

The protein localises to the cytoplasm. It catalyses the reaction L-citrulline + L-aspartate + ATP = 2-(N(omega)-L-arginino)succinate + AMP + diphosphate + H(+). Its pathway is amino-acid biosynthesis; L-arginine biosynthesis; L-arginine from L-ornithine and carbamoyl phosphate: step 2/3. In Acidiphilium cryptum (strain JF-5), this protein is Argininosuccinate synthase.